We begin with the raw amino-acid sequence, 137 residues long: Large ribosomal subunit protein eL28 (137 aa).

The residue at position 2 (serine 2) is an N-acetylserine. Glycyl lysine isopeptide (Lys-Gly) (interchain with G-Cter in SUMO2) cross-links involve residues lysine 58 and lysine 65. At serine 115 the chain carries Phosphoserine.

This sequence belongs to the eukaryotic ribosomal protein eL28 family. In terms of assembly, component of the large ribosomal subunit.

The protein localises to the cytoplasm. Functionally, component of the large ribosomal subunit. The ribosome is a large ribonucleoprotein complex responsible for the synthesis of proteins in the cell. In Oryctolagus cuniculus (Rabbit), this protein is Large ribosomal subunit protein eL28 (RPL28).